A 658-amino-acid chain; its full sequence is Carnitine O-palmitoyltransferase 2, mitochondrial (658 aa).

The transit peptide at Met-1–Leu-25 directs the protein to the mitochondrion. At Ser-26–Leu-178 the chain is on the mitochondrial matrix side. Residue Lys-69 is modified to N6-succinyllysine. Lys-79 bears the N6-acetyllysine mark. Lys-85 carries the post-translational modification N6-succinyllysine. An intramembrane region (note=Mitochondrial inner membrane) is located at residues Asn-179–Asn-208. Residues Ala-209 to Ser-658 lie on the Mitochondrial matrix side of the membrane. N6-acetyllysine; alternate is present on Lys-239. At Lys-239 the chain carries N6-succinyllysine; alternate. Lys-305 bears the N6-acetyllysine mark. His-372 serves as the catalytic Proton acceptor. Residue Lys-418 is modified to N6-acetyllysine; alternate. The residue at position 418 (Lys-418) is an N6-succinyllysine; alternate. Lys-424 and Lys-439 each carry N6-succinyllysine. CoA is bound at residue Gly-452–Asp-464. (R)-carnitine-binding residues include Tyr-486, Ser-488, and Thr-499. Residues Lys-510 and Lys-544 each carry the N6-acetyllysine; alternate modification. N6-succinyllysine; alternate occurs at positions 510 and 544.

This sequence belongs to the carnitine/choline acetyltransferase family.

It is found in the mitochondrion inner membrane. The enzyme catalyses (R)-carnitine + hexadecanoyl-CoA = O-hexadecanoyl-(R)-carnitine + CoA. The catalysed reaction is octanoyl-CoA + (R)-carnitine = O-octanoyl-(R)-carnitine + CoA. It catalyses the reaction decanoyl-CoA + (R)-carnitine = O-decanoyl-(R)-carnitine + CoA. It carries out the reaction dodecanoyl-CoA + (R)-carnitine = O-dodecanoyl-R-carnitine + CoA. The enzyme catalyses tetradecanoyl-CoA + (R)-carnitine = O-tetradecanoyl-(R)-carnitine + CoA. The catalysed reaction is (R)-carnitine + octadecanoyl-CoA = O-octadecanoyl-(R)-carnitine + CoA. It catalyses the reaction eicosanoyl-CoA + (R)-carnitine = O-eicosanoyl-(R)-carnitine + CoA. It carries out the reaction (9Z)-tetradecenoyl-CoA + (R)-carnitine = O-(9Z)-tetradecenoyl-(R)-carnitine + CoA. The enzyme catalyses (5Z)-tetradecenoyl-CoA + (R)-carnitine = O-(5Z)-tetradecenoyl-(R)-carnitine + CoA. The catalysed reaction is (R)-carnitine + (9Z)-octadecenoyl-CoA = O-(9Z)-octadecenoyl-(R)-carnitine + CoA. It catalyses the reaction 4,8-dimethylnonanoyl-CoA + (R)-carnitine = O-4,8-dimethylnonanoyl-(R)-carnitine + CoA. It functions in the pathway lipid metabolism; fatty acid beta-oxidation. Its function is as follows. Involved in the intramitochondrial synthesis of acylcarnitines from accumulated acyl-CoA metabolites. Reconverts acylcarnitines back into the respective acyl-CoA esters that can then undergo beta-oxidation, an essential step for the mitochondrial uptake of long-chain fatty acids and their subsequent beta-oxidation in the mitochondrion. Active with medium (C8-C12) and long-chain (C14-C18) acyl-CoA esters. The polypeptide is Carnitine O-palmitoyltransferase 2, mitochondrial (CPT2) (Macaca fascicularis (Crab-eating macaque)).